Here is a 95-residue protein sequence, read N- to C-terminus: Aspartyl/glutamyl-tRNA(Asn/Gln) amidotransferase subunit C (95 aa).

Belongs to the GatC family. As to quaternary structure, heterotrimer of A, B and C subunits.

It carries out the reaction L-glutamyl-tRNA(Gln) + L-glutamine + ATP + H2O = L-glutaminyl-tRNA(Gln) + L-glutamate + ADP + phosphate + H(+). It catalyses the reaction L-aspartyl-tRNA(Asn) + L-glutamine + ATP + H2O = L-asparaginyl-tRNA(Asn) + L-glutamate + ADP + phosphate + 2 H(+). Allows the formation of correctly charged Asn-tRNA(Asn) or Gln-tRNA(Gln) through the transamidation of misacylated Asp-tRNA(Asn) or Glu-tRNA(Gln) in organisms which lack either or both of asparaginyl-tRNA or glutaminyl-tRNA synthetases. The reaction takes place in the presence of glutamine and ATP through an activated phospho-Asp-tRNA(Asn) or phospho-Glu-tRNA(Gln). This is Aspartyl/glutamyl-tRNA(Asn/Gln) amidotransferase subunit C from Chloroherpeton thalassium (strain ATCC 35110 / GB-78).